Here is a 207-residue protein sequence, read N- to C-terminus: NKYCNIKCSKVAHTVCQYGESTKPSSKNCNKVSITSVGVTEEEKKLIVDEHNRFRQKVAQGLETRGNPGPQPAASDMNNLVWNDELAYIAQVWANQCQFFVHDKCRNTAQYQVGQNIAYSASTAAYPGIVSLIVLWENEVKDFNYSQGITKENFAKVGHYTQVVWAKTKEVGCGSIKYIEKGMKSHYLVCNYGPAGNYMGQPIYTKK.

4 disulfides stabilise this stretch: C4/C16, C8/C105, C29/C97, and C173/C190. The region spanning 48-192 (VDEHNRFRQK…MKSHYLVCNY (145 aa)) is the SCP domain.

Belongs to the CRISP family. Venom allergen 5-like subfamily. In terms of assembly, monomer. In terms of tissue distribution, expressed by the venom gland.

The protein localises to the secreted. This Polybia scutellaris rioplatensis (Camoati) protein is Venom allergen 5.